The following is a 232-amino-acid chain: U2 small nuclear ribonucleoprotein B'' (232 aa).

The RRM 1 domain maps to Gln10–Ala89. A disordered region spans residues Thr100–Asn157. Positions Arg108 to Gln122 are enriched in basic and acidic residues. Polar residues-rich tracts occupy residues Arg123–Asn139 and Phe146–Pro156. An RRM 2 domain is found at Asn158 to Lys232.

This sequence belongs to the RRM U1 A/B'' family. In terms of assembly, component of the spliceosome where it is associated with snRNP U2.

The protein resides in the nucleus. It localises to the cajal body. Its subcellular location is the nucleoplasm. It is found in the cytoplasm. Its function is as follows. Involved in nuclear pre-mRNA splicing. This chain is U2 small nuclear ribonucleoprotein B'' (U2B''), found in Arabidopsis thaliana (Mouse-ear cress).